A 61-amino-acid chain; its full sequence is Insect toxin BsIT1 (61 aa).

One can recognise an LCN-type CS-alpha/beta domain in the interval 1-61; that stretch reads DGYILMRNGC…KHLNYHKKTC (61 aa). 4 disulfides stabilise this stretch: C10/C61, C14/C35, C21/C42, and C25/C44.

The protein belongs to the long (4 C-C) scorpion toxin superfamily. Sodium channel inhibitor family. Beta subfamily. In terms of tissue distribution, expressed by the venom gland.

It localises to the secreted. Its function is as follows. Depressant insect beta-toxins cause a transient contraction paralysis followed by a slow flaccid paralysis. They bind voltage-independently at site-4 of sodium channels (Nav) and shift the voltage of activation toward more negative potentials thereby affecting sodium channel activation and promoting spontaneous and repetitive firing. This toxin is active only on insects and causes a transient contraction paralysis followed by a slow flaccid paralysis. The protein is Insect toxin BsIT1 of Hottentotta tamulus sindicus (Scorpion).